A 231-amino-acid polypeptide reads, in one-letter code: MSMLSLLRSQLFNFMPIIHCLLKLNSTRKFKSFQLKAGFWESIKSGLMKNNSMQVIDPPSTDEENVEPLSQDFVLVEKTEPDGTIEQIIFSSGGDVDVYDLQALCDKVGWPRRPLSKLAAALKNSYIVASLHSIRKSHGSEGNEQKRLIGMARATSDHAFNATIWDVLVDPGYQGQGLGKALIEKLIRTLLQRDIGNITLFADSQVVEFYRNLGFEADPEGIKGMFWYPNH.

The N-acetyltransferase domain maps to 88 to 231; that stretch reads IIFSSGGDVD…IKGMFWYPNH (144 aa).

Belongs to the acetyltransferase family. In terms of assembly, interacts with the effector Avh52 from the pathogen Phytophtora sojae.

It is found in the cytoplasm. It localises to the nucleus. The catalysed reaction is L-lysyl-[histone] + acetyl-CoA = N(6)-acetyl-L-lysyl-[histone] + CoA + H(+). Acetylates histones H2A and H3 in vitro. In terms of biological role, (Microbial infection) Acts as a negative regulator of immunity when hijacked and relocated to the nucleus by the effector Avh52 from the pathogen Phytophtora sojae. Acts as a susceptibility factor that is hijacked by Avh52 in order to promote acetylation of histones H2A and H3 during early infection by Phytophtora sojae. These epigenetic modifications may up-regulate the expression of potential plant susceptibility genes, thereby promoting susceptibility to Phytophtora sojae. This is Histone acetyltransferase TAP1 from Glycine max (Soybean).